A 565-amino-acid polypeptide reads, in one-letter code: MSEQKLALNEYLKTDSDYLRGTIKEGLDSSVTGSFSDGDQQLIKFHGFYQQDDRDLRNERKEQKLEPLYSFMLRARVPGGICSPQQWLGVDKIASTLTSSNSIRLTTRQTFQYHGIPKRNLKTIIQDLDRQALDSIAACGDVNRNVMCNPNPVESKLHEQAYAVAKKLSDHLLPHTRAYAEIWLDEEKLLTTEDETVEPVYGKTYLPRKFKMAVAVPPDNDVDVYTNDLGFIAVAENGELVGFNLTAGGGMGSTHGEVETFPRLADDFGFIKTEDVMKFAEAVMTVQRDWGNRSNRKRSRLKYTIVDHGYEKFKAEVEARAGVKFEPKREVVIGDRGDRYGWVEGVDGKWHLTLFIESGRIKDLPGQTLQTGLREIAKIHKGDFRMTSNQNMIIAGVAAEDKATIEGLARKHGLLGQVLTQTRGHSIACVALPTCPLAMAEAERYFPEFIDHIDALQAKHGISEQAIVVRMTGCPNGCARPFAAEIGLVGKAPGRYNLYLGASFEGTRLNKMHRENIQEADILAELDTLFGRYAVERDAGETFGNFTVRVGVVKAVIDAAKDFHG.

[4Fe-4S] cluster contacts are provided by Cys-429, Cys-435, Cys-474, and Cys-478. Position 478 (Cys-478) interacts with siroheme.

Belongs to the nitrite and sulfite reductase 4Fe-4S domain family. As to quaternary structure, alpha(8)-beta(8). The alpha component is a flavoprotein, the beta component is a hemoprotein. The cofactor is siroheme. Requires [4Fe-4S] cluster as cofactor.

It carries out the reaction hydrogen sulfide + 3 NADP(+) + 3 H2O = sulfite + 3 NADPH + 4 H(+). The protein operates within sulfur metabolism; hydrogen sulfide biosynthesis; hydrogen sulfide from sulfite (NADPH route): step 1/1. Component of the sulfite reductase complex that catalyzes the 6-electron reduction of sulfite to sulfide. This is one of several activities required for the biosynthesis of L-cysteine from sulfate. The protein is Sulfite reductase [NADPH] hemoprotein beta-component of Shewanella putrefaciens (strain CN-32 / ATCC BAA-453).